The sequence spans 183 residues: Phospholipase A2 inhibitor gamma subunit A1 (183 aa).

8 disulfides stabilise this stretch: Cys3/Cys28, Cys6/Cys13, Cys21/Cys49, Cys55/Cys76, Cys77/Cys82, Cys100/Cys125, Cys118/Cys147, and Cys151/Cys173. Asn158 carries N-linked (GlcNAc...) asparagine glycosylation.

This sequence belongs to the CNF-like-inhibitor family. As to quaternary structure, heterodimer of subunit A and subunit B. In terms of tissue distribution, expressed by the liver.

The protein localises to the secreted. Functionally, phospholipase A2 (PA2) inhibitor. Inhibits the enzymatic activity of PA2 of Deinagkistrodon acutus. Also shows a wide anti-hemorrhage activities to D.acutus, Naja atra and Agkistrodon halys venom. The native protein is more potent than the recombinant one. The chain is Phospholipase A2 inhibitor gamma subunit A1 from Trimerodytes annularis (Red-bellied annulate keelback).